The primary structure comprises 266 residues: 5'-nucleotidase SurE (266 aa).

A divalent metal cation is bound by residues aspartate 10, aspartate 11, serine 41, and asparagine 97.

It belongs to the SurE nucleotidase family. Requires a divalent metal cation as cofactor.

It is found in the cytoplasm. The catalysed reaction is a ribonucleoside 5'-phosphate + H2O = a ribonucleoside + phosphate. Nucleotidase that shows phosphatase activity on nucleoside 5'-monophosphates. The polypeptide is 5'-nucleotidase SurE (Methanocella arvoryzae (strain DSM 22066 / NBRC 105507 / MRE50)).